Reading from the N-terminus, the 135-residue chain is UPF0355 protein SAV0387 (135 aa).

Belongs to the UPF0355 family.

This Staphylococcus aureus (strain Mu50 / ATCC 700699) protein is UPF0355 protein SAV0387.